Consider the following 456-residue polypeptide: Glycosyl hydrolase family 109 protein 2 (456 aa).

A signal peptide (tat-type signal) is located at residues 1–33; the sequence is MSGFDRRSFLKASMVTAAATALAACASSERATG. NAD(+) is bound by residues 63 to 64, aspartate 85, 134 to 137, 154 to 155, and asparagine 183; these read ER, WAWH, and EV. Residues tyrosine 212, arginine 231, 243 to 246, and tyrosine 325 each bind substrate; that span reads YPTH. Position 243 (tyrosine 243) interacts with NAD(+).

The protein belongs to the Gfo/Idh/MocA family. Glycosyl hydrolase 109 subfamily. Requires NAD(+) as cofactor. Post-translationally, predicted to be exported by the Tat system. The position of the signal peptide cleavage has not been experimentally proven.

Functionally, glycosidase. The chain is Glycosyl hydrolase family 109 protein 2 from Shewanella sp. (strain ANA-3).